The sequence spans 487 residues: 3-octaprenyl-4-hydroxybenzoate carboxy-lyase (487 aa).

N172 is a Mn(2+) binding site. Prenylated FMN-binding positions include 175–177 (IYR), 189–191 (RWL), and 194–195 (RG). E238 contributes to the Mn(2+) binding site. Catalysis depends on D287, which acts as the Proton donor.

Belongs to the UbiD family. As to quaternary structure, homohexamer. The cofactor is prenylated FMN. It depends on Mn(2+) as a cofactor.

It is found in the cell membrane. It catalyses the reaction a 4-hydroxy-3-(all-trans-polyprenyl)benzoate + H(+) = a 2-(all-trans-polyprenyl)phenol + CO2. The protein operates within cofactor biosynthesis; ubiquinone biosynthesis. Functionally, catalyzes the decarboxylation of 3-octaprenyl-4-hydroxy benzoate to 2-octaprenylphenol, an intermediate step in ubiquinone biosynthesis. This is 3-octaprenyl-4-hydroxybenzoate carboxy-lyase from Nitrosospira multiformis (strain ATCC 25196 / NCIMB 11849 / C 71).